Here is a 443-residue protein sequence, read N- to C-terminus: ATP-dependent protease ATPase subunit HslU (443 aa).

ATP is bound by residues I18, 60–65 (GVGKTE), D256, E321, and R393.

The protein belongs to the ClpX chaperone family. HslU subfamily. A double ring-shaped homohexamer of HslV is capped on each side by a ring-shaped HslU homohexamer. The assembly of the HslU/HslV complex is dependent on binding of ATP.

The protein localises to the cytoplasm. ATPase subunit of a proteasome-like degradation complex; this subunit has chaperone activity. The binding of ATP and its subsequent hydrolysis by HslU are essential for unfolding of protein substrates subsequently hydrolyzed by HslV. HslU recognizes the N-terminal part of its protein substrates and unfolds these before they are guided to HslV for hydrolysis. The sequence is that of ATP-dependent protease ATPase subunit HslU from Photorhabdus laumondii subsp. laumondii (strain DSM 15139 / CIP 105565 / TT01) (Photorhabdus luminescens subsp. laumondii).